Reading from the N-terminus, the 365-residue chain is Phospho-N-acetylmuramoyl-pentapeptide-transferase (365 aa).

The next 10 helical transmembrane spans lie at 22 to 42, 74 to 94, 95 to 115, 133 to 153, 168 to 188, 201 to 221, 240 to 260, 267 to 287, 292 to 312, and 342 to 362; these read YISV…LALG, TMGG…WGDL, TSIY…IGFF, YKFA…FYLL, SLYI…IING, GLAI…AYIE, LAEV…FLWF, VFMG…IAVM, LIFF…MLQV, and KVVI…LAAI.

Belongs to the glycosyltransferase 4 family. MraY subfamily. Mg(2+) serves as cofactor.

The protein localises to the cell inner membrane. It carries out the reaction UDP-N-acetyl-alpha-D-muramoyl-L-alanyl-gamma-D-glutamyl-meso-2,6-diaminopimeloyl-D-alanyl-D-alanine + di-trans,octa-cis-undecaprenyl phosphate = di-trans,octa-cis-undecaprenyl diphospho-N-acetyl-alpha-D-muramoyl-L-alanyl-D-glutamyl-meso-2,6-diaminopimeloyl-D-alanyl-D-alanine + UMP. It participates in cell wall biogenesis; peptidoglycan biosynthesis. In terms of biological role, catalyzes the initial step of the lipid cycle reactions in the biosynthesis of the cell wall peptidoglycan: transfers peptidoglycan precursor phospho-MurNAc-pentapeptide from UDP-MurNAc-pentapeptide onto the lipid carrier undecaprenyl phosphate, yielding undecaprenyl-pyrophosphoryl-MurNAc-pentapeptide, known as lipid I. This Francisella tularensis subsp. tularensis (strain FSC 198) protein is Phospho-N-acetylmuramoyl-pentapeptide-transferase.